A 478-amino-acid polypeptide reads, in one-letter code: Membrane-bound lytic murein transglycosylase F (478 aa).

Residues 1 to 29 (MFPDSSYLFSMRSLSRFLIAIFGCGALLA) form the signal peptide. The interval 30–269 (SCDSFERSVL…RLLDRYYGHI (240 aa)) is non-LT domain. The tract at residues 271–478 (RLHHTDVNGI…RKEDDSWQEF (208 aa)) is LT domain. Glu316 is an active-site residue.

The protein in the N-terminal section; belongs to the bacterial solute-binding protein 3 family. It in the C-terminal section; belongs to the transglycosylase Slt family.

The protein resides in the cell outer membrane. The enzyme catalyses Exolytic cleavage of the (1-&gt;4)-beta-glycosidic linkage between N-acetylmuramic acid (MurNAc) and N-acetylglucosamine (GlcNAc) residues in peptidoglycan, from either the reducing or the non-reducing ends of the peptidoglycan chains, with concomitant formation of a 1,6-anhydrobond in the MurNAc residue.. In terms of biological role, murein-degrading enzyme that degrades murein glycan strands and insoluble, high-molecular weight murein sacculi, with the concomitant formation of a 1,6-anhydromuramoyl product. Lytic transglycosylases (LTs) play an integral role in the metabolism of the peptidoglycan (PG) sacculus. Their lytic action creates space within the PG sacculus to allow for its expansion as well as for the insertion of various structures such as secretion systems and flagella. This is Membrane-bound lytic murein transglycosylase F from Nitrosospira multiformis (strain ATCC 25196 / NCIMB 11849 / C 71).